A 388-amino-acid chain; its full sequence is MVTVEEVRKAQRAEGPATILAIGTVTPANCVNQSTYPDYYFRITNSEHKTELKEKFQRMCDKSMITKRYMHLTEEILKENPSFCEYMAPSLDARQDIAVVEVPKLGKEAAQSAIKEWGQPKSKITHVVFCTTSGIDMPGADYQLTKLLGLRPSVKRLMMYQQGCFAGGTVLRLAKDLAENNKGARVLIVCSEITVVTFRGPSETHLDSLVGQALFGDGAAAVIVGADPTPAEKPLFQLVSAAQTLAPNSCGAIDGHLREVGLTFHLLKDVPSVVSNNIEKCLFEAFNPLGISDWNSVFWIAHPGGPAILDQVEDKLGLKPEKLRATRHVLSEYGNMSSACVLFILDEMRKASSNAGLGTTGEGLEWGVLFGFGPGLTIETVVLHSVPT.

Residue cysteine 164 is part of the active site.

This sequence belongs to the thiolase-like superfamily. Chalcone/stilbene synthases family.

It catalyses the reaction (E)-4-coumaroyl-CoA + 3 malonyl-CoA + 3 H(+) = 2',4,4',6'-tetrahydroxychalcone + 3 CO2 + 4 CoA. It functions in the pathway secondary metabolite biosynthesis; flavonoid biosynthesis. In terms of biological role, the primary product of this enzyme is 4,2',4',6'-tetrahydroxychalcone (also termed naringenin-chalcone or chalcone) which can under specific conditions spontaneously isomerize into naringenin. This Ipomoea batatas (Sweet potato) protein is Chalcone synthase DIV (CHS-DIV).